Reading from the N-terminus, the 287-residue chain is ATP synthase gamma chain (287 aa).

It belongs to the ATPase gamma chain family. In terms of assembly, F-type ATPases have 2 components, CF(1) - the catalytic core - and CF(0) - the membrane proton channel. CF(1) has five subunits: alpha(3), beta(3), gamma(1), delta(1), epsilon(1). CF(0) has three main subunits: a, b and c.

It localises to the cell inner membrane. Functionally, produces ATP from ADP in the presence of a proton gradient across the membrane. The gamma chain is believed to be important in regulating ATPase activity and the flow of protons through the CF(0) complex. The chain is ATP synthase gamma chain from Geotalea uraniireducens (strain Rf4) (Geobacter uraniireducens).